The following is a 272-amino-acid chain: Peptidoglycolipid exporter Gap (272 aa).

6 helical membrane passes run 5–25 (ILGL…ILLV), 36–56 (VVFW…PLFV), 79–99 (IEPF…VIAL), 171–191 (LWVA…VLLV), 206–226 (IIAV…TLLS), and 252–272 (ILLV…LGVI).

The protein belongs to the peptidoglycolipid addressing protein (GAP) (TC 2.A.116) family.

It is found in the cell inner membrane. Its function is as follows. Required for the transport of peptidoglycolipids (GPLs) to the cell surface. This Mycolicibacterium smegmatis (strain ATCC 700084 / mc(2)155) (Mycobacterium smegmatis) protein is Peptidoglycolipid exporter Gap.